The sequence spans 71 residues: Beta-defensin 7 (71 aa).

Residues Met1–Ser22 form the signal peptide. A Pyrrolidone carboxylic acid modification is found at Gln23. Positions Gln23–Ile25 are excised as a propeptide. 3 disulfides stabilise this stretch: Cys31/Cys58, Cys38/Cys52, and Cys42/Cys59.

This sequence belongs to the beta-defensin family. LAP/TAP subfamily.

Its subcellular location is the secreted. Has bactericidal activity. The chain is Beta-defensin 7 (Defb7) from Mus musculus (Mouse).